The chain runs to 248 residues: Glutathione S-transferase omega-2 (248 aa).

The region spanning 22 to 101 (GVIRIYSMRF…YLDDVYPGRK (80 aa)) is the GST N-terminal domain. Cysteine 32 serves as the catalytic Nucleophile. Glutathione is bound by residues lysine 59, isoleucine 72, and 85 to 86 (ES). The region spanning 106-231 (DPYERARQKM…VFLGFLNLYF (126 aa)) is the GST C-terminal domain.

It belongs to the GST superfamily. Omega family.

It catalyses the reaction RX + glutathione = an S-substituted glutathione + a halide anion + H(+). The catalysed reaction is L-dehydroascorbate + 2 glutathione = glutathione disulfide + L-ascorbate. It carries out the reaction methylarsonate + 2 glutathione + H(+) = methylarsonous acid + glutathione disulfide + H2O. Functionally, exhibits glutathione-dependent thiol transferase activity. Has high dehydroascorbate reductase activity and may contribute to the recycling of ascorbic acid. Participates in the biotransformation of inorganic arsenic and reduces monomethylarsonic acid (MMA). The protein is Glutathione S-transferase omega-2 (Gsto2) of Mus musculus (Mouse).